The primary structure comprises 243 residues: GTP cyclohydrolase 1 type 2 (243 aa).

A divalent metal cation is bound by residues His63, His64, Asp102, His209, and Glu213.

Belongs to the GTP cyclohydrolase I type 2/NIF3 family. As to quaternary structure, homohexamer.

It catalyses the reaction GTP + H2O = 7,8-dihydroneopterin 3'-triphosphate + formate + H(+). It participates in cofactor biosynthesis; 7,8-dihydroneopterin triphosphate biosynthesis; 7,8-dihydroneopterin triphosphate from GTP: step 1/1. Its function is as follows. Converts GTP to dihydroneopterin triphosphate. This Helicobacter pylori (strain J99 / ATCC 700824) (Campylobacter pylori J99) protein is GTP cyclohydrolase 1 type 2.